Here is a 420-residue protein sequence, read N- to C-terminus: Cyclin-B2-1 (420 aa).

The segment at 1 to 61 is disordered; sequence MDRASENRRL…EKSGKEEQKP (61 aa). The span at 49–60 shows a compositional bias: basic and acidic residues; that stretch reads PMLEKSGKEEQK.

Belongs to the cyclin family. Cyclin AB subfamily. Interacts with CDKB2-1. In terms of tissue distribution, expressed in the root apices.

Involved in the control of the cell cycle at the G2/M (mitosis) transition. May activate CDKB2-1 kinase. This is Cyclin-B2-1 (CYCB2-1) from Oryza sativa subsp. japonica (Rice).